A 431-amino-acid polypeptide reads, in one-letter code: tRNA (adenine(37)-N6)-methyltransferase (431 aa).

In terms of domain architecture, TsaA-like spans 30–168 (TEPIGYLESC…YIADYDSPQN (139 aa)). S-adenosyl-L-methionine contacts are provided by residues 47 to 49 (PRQ), 90 to 91 (HK), Arg-117, Leu-127, and 148 to 151 (IHGT). Disordered regions lie at residues 167 to 189 (QNLE…ATAN) and 201 to 243 (KAQP…DRER). Residues 207–243 (STKEKPKCREHRTSDENSQKFRDTSEIQHTLPEDRER) show a composition bias toward basic and acidic residues.

This sequence belongs to the tRNA methyltransferase O family.

It carries out the reaction N(6)-L-threonylcarbamoyladenosine(37) in tRNA + S-adenosyl-L-methionine = N(6)-methyl,N(6)-L-threonylcarbamoyladenosine(37) in tRNA + S-adenosyl-L-homocysteine + H(+). Functionally, S-adenosyl-L-methionine-dependent methyltransferase responsible for the addition of the methyl group in the formation of N6-methyl-N6-threonylcarbamoyladenosine at position 37 (m(6)t(6)A37) of the tRNA anticodon loop of tRNA(Ser)(GCU). The methyl group of m(6)t(6)A37 may improve the efficiency of the tRNA decoding ability. May bind to tRNA. The chain is tRNA (adenine(37)-N6)-methyltransferase from Rattus norvegicus (Rat).